We begin with the raw amino-acid sequence, 247 residues long: UPF0273 protein PF1931 (247 aa).

The region spanning R3–L247 is the KaiC domain. Residue G30–S37 coordinates ATP.

This sequence belongs to the UPF0273 family.

The polypeptide is UPF0273 protein PF1931 (Pyrococcus furiosus (strain ATCC 43587 / DSM 3638 / JCM 8422 / Vc1)).